Consider the following 156-residue polypeptide: D-aminoacyl-tRNA deacylase (156 aa).

Residues 142 to 143 carry the Gly-cisPro motif, important for rejection of L-amino acids motif; sequence GP.

Belongs to the DTD family. In terms of assembly, homodimer.

It localises to the cytoplasm. The enzyme catalyses glycyl-tRNA(Ala) + H2O = tRNA(Ala) + glycine + H(+). It carries out the reaction a D-aminoacyl-tRNA + H2O = a tRNA + a D-alpha-amino acid + H(+). An aminoacyl-tRNA editing enzyme that deacylates mischarged D-aminoacyl-tRNAs. Also deacylates mischarged glycyl-tRNA(Ala), protecting cells against glycine mischarging by AlaRS. Acts via tRNA-based rather than protein-based catalysis; rejects L-amino acids rather than detecting D-amino acids in the active site. By recycling D-aminoacyl-tRNA to D-amino acids and free tRNA molecules, this enzyme counteracts the toxicity associated with the formation of D-aminoacyl-tRNA entities in vivo and helps enforce protein L-homochirality. The polypeptide is D-aminoacyl-tRNA deacylase (Delftia acidovorans (strain DSM 14801 / SPH-1)).